We begin with the raw amino-acid sequence, 699 residues long: Elongation factor G (699 aa).

Residues 8–290 form the tr-type G domain; the sequence is ERYRNIGIMA…GVIEYLPSPV (283 aa). Residues 17 to 24, 88 to 92, and 142 to 145 each bind GTP; these read AHIDAGKT, DTPGH, and NKMD.

Belongs to the TRAFAC class translation factor GTPase superfamily. Classic translation factor GTPase family. EF-G/EF-2 subfamily.

Its subcellular location is the cytoplasm. Catalyzes the GTP-dependent ribosomal translocation step during translation elongation. During this step, the ribosome changes from the pre-translocational (PRE) to the post-translocational (POST) state as the newly formed A-site-bound peptidyl-tRNA and P-site-bound deacylated tRNA move to the P and E sites, respectively. Catalyzes the coordinated movement of the two tRNA molecules, the mRNA and conformational changes in the ribosome. This is Elongation factor G from Alkalilimnicola ehrlichii (strain ATCC BAA-1101 / DSM 17681 / MLHE-1).